The chain runs to 336 residues: UPF0104 membrane protein MJ1595 (336 aa).

9 consecutive transmembrane segments (helical) span residues 9–29 (STIL…YIGL), 40–60 (NPEY…ILSA), 68–88 (ILGY…GLFI), 127–147 (VLDT…FVVT), 154–174 (YLIL…YLIA), 223–243 (WEVV…ILKL), 245–265 (LLFL…VYLI), 285–305 (VMIL…AVTL), and 306–326 (LDRL…MLII).

The protein belongs to the UPF0104 family.

It localises to the cell membrane. The sequence is that of UPF0104 membrane protein MJ1595 from Methanocaldococcus jannaschii (strain ATCC 43067 / DSM 2661 / JAL-1 / JCM 10045 / NBRC 100440) (Methanococcus jannaschii).